A 378-amino-acid chain; its full sequence is Mannitol-1-phosphate 5-dehydrogenase (378 aa).

4 to 15 contributes to the NAD(+) binding site; the sequence is SVHFGAGNIGRG.

The protein belongs to the mannitol dehydrogenase family.

It carries out the reaction D-mannitol 1-phosphate + NAD(+) = beta-D-fructose 6-phosphate + NADH + H(+). This is Mannitol-1-phosphate 5-dehydrogenase from Streptococcus pneumoniae serotype 4 (strain ATCC BAA-334 / TIGR4).